The primary structure comprises 185 residues: Prenylated Rab acceptor protein 1 (185 aa).

At 1 to 78 (MAAQKDQQKD…RNVEYYQSNY (78 aa)) the chain is on the cytoplasmic side. A required for interaction with prenylated RAB3A and VAMP2 region spans residues 30 to 54 (AGREWLERRRATIRPWSTFVDQQRF). The next 2 membrane-spanning stretches (helical) occupy residues 79–94 (VFVF…VTSP) and 95–112 (MLLV…ILYL). Residues 113 to 131 (RTLESKLVLFGREVSPAHQ) lie on the Cytoplasmic side of the membrane. 2 consecutive transmembrane segments (helical) span residues 132–148 (YALA…LAGA) and 149–165 (GSAV…VIGS). Residues 165–185 (SHAAFHQIEAVDGEELQMEPV) are required for interaction with GDI1. Residues 166–185 (HAAFHQIEAVDGEELQMEPV) lie on the Cytoplasmic side of the membrane. The interval 175–185 (VDGEELQMEPV) is required for interaction with prenylated RAB3A and VAMP2. The interval 175 to 185 (VDGEELQMEPV) is homodimerization.

It belongs to the PRA1 family. As to quaternary structure, homodimer. Interacts with VAMP2 (synaptobrevin-2), GDI1, and PCLO. Interacts specifically with prenylated Rab proteins; strongly with RAB4B, RAB5A and RAB5C, and weakly with RAB4A, RAB6, RAB7A, RAB17 and RAB22. Interacts with NDRG1. In terms of tissue distribution, ubiquitous. Strongest expression found in placenta, pituitary gland, kidney, lung and stomach.

It is found in the cell membrane. The protein localises to the cytoplasm. It localises to the golgi apparatus. The protein resides in the cytoplasmic vesicle. Its subcellular location is the secretory vesicle. It is found in the synaptic vesicle. Functionally, general Rab protein regulator required for vesicle formation from the Golgi complex. May control vesicle docking and fusion by mediating the action of Rab GTPases to the SNARE complexes. In addition it inhibits the removal of Rab GTPases from the membrane by GDI. This is Prenylated Rab acceptor protein 1 (RABAC1) from Homo sapiens (Human).